Reading from the N-terminus, the 396-residue chain is Putative cyclin-B3-1 (396 aa).

A disordered region spans residues 1–98; the sequence is MLRDGNKQSK…KVLDVTAKPK (98 aa). Polar residues predominate over residues 21 to 32; sequence KTTVKTSLQNRS. Positions 39-57 are enriched in low complexity; that stretch reads VGRSKSRSISSIPSSAVAS. A compositionally biased stretch (polar residues) spans 76-85; that stretch reads GESSSSGNKD.

The protein belongs to the cyclin family. Cyclin AB subfamily.

This chain is Putative cyclin-B3-1 (CYCB3-1), found in Arabidopsis thaliana (Mouse-ear cress).